We begin with the raw amino-acid sequence, 352 residues long: UDP-3-O-acylglucosamine N-acyltransferase (352 aa).

The active-site Proton acceptor is His244.

The protein belongs to the transferase hexapeptide repeat family. LpxD subfamily. In terms of assembly, homotrimer.

The enzyme catalyses a UDP-3-O-[(3R)-3-hydroxyacyl]-alpha-D-glucosamine + a (3R)-hydroxyacyl-[ACP] = a UDP-2-N,3-O-bis[(3R)-3-hydroxyacyl]-alpha-D-glucosamine + holo-[ACP] + H(+). It participates in bacterial outer membrane biogenesis; LPS lipid A biosynthesis. Catalyzes the N-acylation of UDP-3-O-acylglucosamine using 3-hydroxyacyl-ACP as the acyl donor. Is involved in the biosynthesis of lipid A, a phosphorylated glycolipid that anchors the lipopolysaccharide to the outer membrane of the cell. The sequence is that of UDP-3-O-acylglucosamine N-acyltransferase from Anaeromyxobacter sp. (strain Fw109-5).